Consider the following 206-residue polypeptide: Na(+)-translocating NADH-quinone reductase subunit E (206 aa).

6 consecutive transmembrane segments (helical) span residues 12–32 (AVFV…FIAI), 36–56 (IQTA…TVPV), 85–105 (FLGL…LEMT), 118–138 (GIFL…LFMV), 148–168 (VVYG…LAGI), and 184–204 (LGIT…FSGV).

This sequence belongs to the NqrDE/RnfAE family. As to quaternary structure, composed of six subunits; NqrA, NqrB, NqrC, NqrD, NqrE and NqrF.

The protein localises to the cell inner membrane. It catalyses the reaction a ubiquinone + n Na(+)(in) + NADH + H(+) = a ubiquinol + n Na(+)(out) + NAD(+). Its function is as follows. NQR complex catalyzes the reduction of ubiquinone-1 to ubiquinol by two successive reactions, coupled with the transport of Na(+) ions from the cytoplasm to the periplasm. NqrA to NqrE are probably involved in the second step, the conversion of ubisemiquinone to ubiquinol. This chain is Na(+)-translocating NADH-quinone reductase subunit E, found in Alcanivorax borkumensis (strain ATCC 700651 / DSM 11573 / NCIMB 13689 / SK2).